The chain runs to 118 residues: Large ribosomal subunit protein bL20 (118 aa).

It belongs to the bacterial ribosomal protein bL20 family.

In terms of biological role, binds directly to 23S ribosomal RNA and is necessary for the in vitro assembly process of the 50S ribosomal subunit. It is not involved in the protein synthesizing functions of that subunit. The sequence is that of Large ribosomal subunit protein bL20 from Thermotoga neapolitana (strain ATCC 49049 / DSM 4359 / NBRC 107923 / NS-E).